Reading from the N-terminus, the 530-residue chain is 6-phosphofructo-2-kinase/fructose-2,6-bisphosphatase 2 (530 aa).

Over residues 1–15 the composition is skewed to polar residues; that stretch reads MSGASSSEQNNNSYE. Residues 1–21 form a disordered region; sequence MSGASSSEQNNNSYETKPPNL. N-acetylserine is present on Ser2. Residues 2 to 248 are 6-phosphofructo-2-kinase; it reads SGASSSEQNN…VYYLMNIHVQ (247 aa). The residue at position 29 (Ser29) is a Phosphoserine; by PKA. Position 45 to 53 (45 to 53) interacts with ATP; that stretch reads GLPARGKTY. Beta-D-fructose 6-phosphate-binding residues include Arg78 and Arg102. Asp128 is an active-site residue. Thr130 and Arg136 together coordinate beta-D-fructose 6-phosphate. Residue Cys158 is part of the active site. 167–172 contributes to the ATP binding site; the sequence is NILEVK. Beta-D-fructose 6-phosphate contacts are provided by Lys172, Arg193, and Tyr197. Residues 249-530 form a fructose-2,6-bisphosphatase region; sequence PRTIYLCRHG…PPALASCPCH (282 aa). Arg256 lines the beta-D-fructose 2,6-bisphosphate pocket. His257 serves as the catalytic Tele-phosphohistidine intermediate. A beta-D-fructose 2,6-bisphosphate-binding site is contributed by Gly269. The active-site Proton donor/acceptor is Glu326. Beta-D-fructose 2,6-bisphosphate contacts are provided by Tyr337, Arg351, Lys355, Tyr366, Gln392, and Arg396. 348–351 serves as a coordination point for ATP; it reads FALR. Residues 392-396 and Tyr428 each bind ATP; that span reads QAVMR. Positions 446 to 512 are disordered; it reads RDKPTNNFPK…GPTSRRPKSH (67 aa). Residues 450-476 show a composition bias toward polar residues; that stretch reads TNNFPKNQTPVRMRRNSFTPLSSSNTI. Residue Ser466 is modified to Phosphoserine; by AMPK and PKA. Thr468 carries the post-translational modification Phosphothreonine. At Thr475 the chain carries Phosphothreonine; by PKC. Ser483 and Ser493 each carry phosphoserine.

In the C-terminal section; belongs to the phosphoglycerate mutase family. In terms of assembly, homodimer. Forms a heterodimer with PFKFB3. In terms of processing, phosphorylation by AMPK stimulates activity.

It catalyses the reaction beta-D-fructose 2,6-bisphosphate + H2O = beta-D-fructose 6-phosphate + phosphate. It carries out the reaction beta-D-fructose 6-phosphate + ATP = beta-D-fructose 2,6-bisphosphate + ADP + H(+). With respect to regulation, phosphorylation results in the activation of the kinase activity. In terms of biological role, synthesis and degradation of fructose 2,6-bisphosphate. This is 6-phosphofructo-2-kinase/fructose-2,6-bisphosphatase 2 (PFKFB2) from Pongo abelii (Sumatran orangutan).